A 328-amino-acid polypeptide reads, in one-letter code: tRNA dimethylallyltransferase (328 aa).

Glycine 23–serine 30 contributes to the ATP binding site. Position 25 to 30 (threonine 25 to serine 30) interacts with substrate. The interaction with substrate tRNA stretch occupies residues aspartate 48 to glutamine 51.

This sequence belongs to the IPP transferase family. In terms of assembly, monomer. Mg(2+) serves as cofactor.

It carries out the reaction adenosine(37) in tRNA + dimethylallyl diphosphate = N(6)-dimethylallyladenosine(37) in tRNA + diphosphate. In terms of biological role, catalyzes the transfer of a dimethylallyl group onto the adenine at position 37 in tRNAs that read codons beginning with uridine, leading to the formation of N6-(dimethylallyl)adenosine (i(6)A). The protein is tRNA dimethylallyltransferase of Rhodopseudomonas palustris (strain BisA53).